A 395-amino-acid chain; its full sequence is Ankyrin repeat domain-containing protein 65 (395 aa).

ANK repeat units follow at residues 52–81, 85–114, 118–147, 151–180, 185–212, 213–241, 245–274, 278–307, 311–340, and 344–373; these read QAWG…SVEE, AGRT…QVGA, AGRT…PANA, AGLT…PGPT, RGWT…GGAR, LDSV…PVDA, VGAT…DPSL, HGRS…EVDS, LGLT…EINA, and LHKT…SPTL.

In Bos taurus (Bovine), this protein is Ankyrin repeat domain-containing protein 65 (ANKRD65).